The sequence spans 202 residues: Guanylyl cyclase-activating protein 1 (202 aa).

Residue G2 is the site of N-myristoyl glycine attachment. Deamidated asparagine is present on N3. EF-hand domains follow at residues 31-49, 51-86, 87-122, and 131-166; these read SGQL…KNLS, SASQ…VLKG, KVEQ…IRTI, and SAEE…DQML. 15 residues coordinate Ca(2+): D64, N66, D68, Y70, E75, D100, D102, N104, C106, E111, D144, N146, D148, E150, and E155.

In terms of assembly, homodimer. In terms of tissue distribution, in the retina, expressed in rod photoreceptors (at protein level). Expressed in cone photoreceptors.

It localises to the membrane. The protein resides in the photoreceptor inner segment. Its subcellular location is the cell projection. It is found in the cilium. The protein localises to the photoreceptor outer segment. Its function is as follows. Stimulates retinal guanylyl cyclase when free calcium ions concentration is low and inhibits guanylyl cyclase when free calcium ions concentration is elevated. This Ca(2+)-sensitive regulation of retinal guanylyl cyclase is a key event in recovery of the dark state of rod photoreceptors following light exposure. May be involved in cone photoreceptor light response and recovery of response in bright light. This chain is Guanylyl cyclase-activating protein 1 (Guca1a), found in Mus musculus (Mouse).